The chain runs to 637 residues: Nuclear receptor subfamily 2 group C member 1-B (637 aa).

Residues 149–224 (VELCVVCGDK…LGMKQDSVQC (76 aa)) constitute a DNA-binding region (nuclear receptor). 2 consecutive NR C4-type zinc fingers follow at residues 152–172 (CVVC…CEGC) and 188–207 (CRGS…CQYC). One can recognise an NR LBD domain in the interval 383–624 (CVGSGSNLLP…SIIPYILRME (242 aa)).

The protein belongs to the nuclear hormone receptor family. NR2 subfamily.

The protein localises to the nucleus. Functionally, orphan nuclear receptor. Binds the IR7 element in the promoter of its own gene in an autoregulatory negative feedback mechanism. Primarily repressor of a broad range of genes. Binds to hormone response elements (HREs) consisting of two 5'-AGGTCA-3' half site direct repeat consensus sequences. The chain is Nuclear receptor subfamily 2 group C member 1-B (nr2c1-b) from Xenopus laevis (African clawed frog).